Reading from the N-terminus, the 203-residue chain is Dephospho-CoA kinase (203 aa).

In terms of domain architecture, DPCK spans 4–203 (VIGITGGIAT…EEGYIQSESE (200 aa)). Residue 12-17 (ATGKST) participates in ATP binding.

It belongs to the CoaE family.

Its subcellular location is the cytoplasm. It carries out the reaction 3'-dephospho-CoA + ATP = ADP + CoA + H(+). It functions in the pathway cofactor biosynthesis; coenzyme A biosynthesis; CoA from (R)-pantothenate: step 5/5. Catalyzes the phosphorylation of the 3'-hydroxyl group of dephosphocoenzyme A to form coenzyme A. This Staphylococcus epidermidis (strain ATCC 35984 / DSM 28319 / BCRC 17069 / CCUG 31568 / BM 3577 / RP62A) protein is Dephospho-CoA kinase.